Reading from the N-terminus, the 363-residue chain is UDP-N-acetylglucosamine--N-acetylmuramyl-(pentapeptide) pyrophosphoryl-undecaprenol N-acetylglucosamine transferase (363 aa).

UDP-N-acetyl-alpha-D-glucosamine is bound by residues 10-12 (TGG), N124, S195, I248, and Q293.

This sequence belongs to the glycosyltransferase 28 family. MurG subfamily.

The protein resides in the cell membrane. The enzyme catalyses Mur2Ac(oyl-L-Ala-gamma-D-Glu-L-Lys-D-Ala-D-Ala)-di-trans,octa-cis-undecaprenyl diphosphate + UDP-N-acetyl-alpha-D-glucosamine = beta-D-GlcNAc-(1-&gt;4)-Mur2Ac(oyl-L-Ala-gamma-D-Glu-L-Lys-D-Ala-D-Ala)-di-trans,octa-cis-undecaprenyl diphosphate + UDP + H(+). Its pathway is cell wall biogenesis; peptidoglycan biosynthesis. Cell wall formation. Catalyzes the transfer of a GlcNAc subunit on undecaprenyl-pyrophosphoryl-MurNAc-pentapeptide (lipid intermediate I) to form undecaprenyl-pyrophosphoryl-MurNAc-(pentapeptide)GlcNAc (lipid intermediate II). This Lacticaseibacillus casei (strain BL23) (Lactobacillus casei) protein is UDP-N-acetylglucosamine--N-acetylmuramyl-(pentapeptide) pyrophosphoryl-undecaprenol N-acetylglucosamine transferase.